The following is a 163-amino-acid chain: Type-2 ice-structuring protein (163 aa).

A signal peptide spans 1 to 17 (MLTVSLLVCAMMALTQA). A propeptide spanning residues 18 to 34 (NDDKILKGTATEAGPVS) is cleaved from the precursor. The region spanning 39–163 (PNCPAGWQPL…SHKSVCAMTF (125 aa)) is the C-type lectin domain. Disulfide bonds link C41/C52, C69/C159, C103/C134, C123/C145, and C135/C151.

The N-terminus is blocked.

The protein resides in the secreted. In terms of biological role, antifreeze proteins lower the blood freezing point. The polypeptide is Type-2 ice-structuring protein (Hemitripterus americanus (Sea raven)).